The chain runs to 265 residues: Glutamate racemase (265 aa).

Residues 9-10 (DS) and 41-42 (YS) contribute to the substrate site. Catalysis depends on Cys73, which acts as the Proton donor/acceptor. 74–75 (NT) is a binding site for substrate. The active-site Proton donor/acceptor is Cys184. 185–186 (TH) is a binding site for substrate.

This sequence belongs to the aspartate/glutamate racemases family.

It carries out the reaction L-glutamate = D-glutamate. The protein operates within cell wall biogenesis; peptidoglycan biosynthesis. In terms of biological role, provides the (R)-glutamate required for cell wall biosynthesis. In Actinobacillus pleuropneumoniae serotype 3 (strain JL03), this protein is Glutamate racemase.